Consider the following 140-residue polypeptide: ATP synthase epsilon chain (140 aa).

The protein belongs to the ATPase epsilon chain family. In terms of assembly, F-type ATPases have 2 components, CF(1) - the catalytic core - and CF(0) - the membrane proton channel. CF(1) has five subunits: alpha(3), beta(3), gamma(1), delta(1), epsilon(1). CF(0) has three main subunits: a, b and c.

The protein localises to the cell inner membrane. Produces ATP from ADP in the presence of a proton gradient across the membrane. This Thermodesulfovibrio yellowstonii (strain ATCC 51303 / DSM 11347 / YP87) protein is ATP synthase epsilon chain.